Reading from the N-terminus, the 295-residue chain is MNPGDAQSIDRRCVRRSFDASAERYDEVAVLQREVADRLLERLEPVRVHPRRVLDLGAGTGYATRGLLRRYRKAEVHAVDLAPAMLQRVRRRAPWLRRPRCVCADLHALPYPDDSFELVFSNLALQWAEDLPTALRELQRVTAPEGAVMFATFGPETLHELRGAWAEVGDQARVHRFADKHDVGDRMLEAGFVDPVLDGESFTLTYAQPREVMRDLKALGASNADPGRPRGLLSPHRLARVEAAYRLAWRQPDGRVPATYEVVYGHAWGMGGTPQRADDTGEVRLDVHGIRRRRR.

It belongs to the methyltransferase superfamily.

The enzyme catalyses malonyl-[ACP] + S-adenosyl-L-methionine = malonyl-[ACP] methyl ester + S-adenosyl-L-homocysteine. The protein operates within cofactor biosynthesis; biotin biosynthesis. Functionally, converts the free carboxyl group of a malonyl-thioester to its methyl ester by transfer of a methyl group from S-adenosyl-L-methionine (SAM). It allows to synthesize pimeloyl-ACP via the fatty acid synthetic pathway. The sequence is that of Malonyl-[acyl-carrier protein] O-methyltransferase from Halorhodospira halophila (strain DSM 244 / SL1) (Ectothiorhodospira halophila (strain DSM 244 / SL1)).